A 287-amino-acid chain; its full sequence is Bifunctional protein FolD (287 aa).

Residues asparagine 165–serine 167, serine 190, and isoleucine 233 contribute to the NADP(+) site.

It belongs to the tetrahydrofolate dehydrogenase/cyclohydrolase family. Homodimer.

The enzyme catalyses (6R)-5,10-methylene-5,6,7,8-tetrahydrofolate + NADP(+) = (6R)-5,10-methenyltetrahydrofolate + NADPH. It carries out the reaction (6R)-5,10-methenyltetrahydrofolate + H2O = (6R)-10-formyltetrahydrofolate + H(+). The protein operates within one-carbon metabolism; tetrahydrofolate interconversion. Functionally, catalyzes the oxidation of 5,10-methylenetetrahydrofolate to 5,10-methenyltetrahydrofolate and then the hydrolysis of 5,10-methenyltetrahydrofolate to 10-formyltetrahydrofolate. The polypeptide is Bifunctional protein FolD (Nitrosopumilus maritimus (strain SCM1)).